The sequence spans 412 residues: Protein translocase subunit SecY (412 aa).

Helical transmembrane passes span 17 to 37 (IFLT…PVPG), 58 to 78 (IFSG…VPYI), 117 to 137 (ALGW…PYVF), 143 to 163 (FVVQ…WFSE), 170 to 190 (IGNG…PKLI), 251 to 271 (VMPI…GQVI), 293 to 313 (YLIF…SLII), 350 to 370 (TFLG…IENI), and 372 to 392 (SIST…GVAI).

This sequence belongs to the SecY/SEC61-alpha family. Component of the plastid Sec protein translocase complex, which is composed of at least SecY and SecE.

It is found in the plastid. The protein resides in the chloroplast thylakoid membrane. Its function is as follows. The central subunit of the protein translocation channel SecYE. Consists of two halves formed by TMs 1-5 and 6-10. These two domains form a lateral gate at the front which open onto the bilayer between TMs 2 and 7, and are clamped together by SecE at the back. The channel is closed by both a pore ring composed of hydrophobic SecY resides and a short helix (helix 2A) on the extracellular side of the membrane which forms a plug. This Pyrenomonas salina protein is Protein translocase subunit SecY.